Consider the following 218-residue polypeptide: Adenylate kinase (218 aa).

An ATP-binding site is contributed by 10–15 (GAGKGT). The interval 30–59 (STGDMLRAAVKAGTPLGLQAKAVMDSGSLV) is NMP. Residues T31, R36, 57-59 (SLV), 85-88 (GFPR), and Q92 contribute to the AMP site. Residues 122 to 159 (GRRSHPASGRTYHVRFNPPKIDGKDDLTGEALLQREDD) form an LID region. ATP-binding positions include R123 and 132 to 133 (TY). Residues R156 and R167 each contribute to the AMP site. G203 contacts ATP.

Belongs to the adenylate kinase family. In terms of assembly, monomer.

The protein localises to the cytoplasm. It catalyses the reaction AMP + ATP = 2 ADP. It functions in the pathway purine metabolism; AMP biosynthesis via salvage pathway; AMP from ADP: step 1/1. Functionally, catalyzes the reversible transfer of the terminal phosphate group between ATP and AMP. Plays an important role in cellular energy homeostasis and in adenine nucleotide metabolism. In Verminephrobacter eiseniae (strain EF01-2), this protein is Adenylate kinase.